The chain runs to 54 residues: U-reduvitoxin-Pr7a (54 aa).

The N-terminal stretch at 1–23 (MDFLRILLFVLACIMALFTSAIA) is a signal peptide. Cystine bridges form between cysteine 26–cysteine 41, cysteine 33–cysteine 46, and cysteine 40–cysteine 53.

The protein belongs to the venom Ptu1-like knottin family. As to expression, expressed by the venom gland.

The protein localises to the secreted. Binds reversibly and blocks P/Q-type voltage-gated calcium channels (Cav). This is U-reduvitoxin-Pr7a from Platymeris rhadamanthus (Red spot assassin bug).